The following is a 154-amino-acid chain: 3-hydroxyacyl-[acyl-carrier-protein] dehydratase FabZ (154 aa).

His59 is a catalytic residue.

This sequence belongs to the thioester dehydratase family. FabZ subfamily.

The protein localises to the cytoplasm. The catalysed reaction is a (3R)-hydroxyacyl-[ACP] = a (2E)-enoyl-[ACP] + H2O. Functionally, involved in unsaturated fatty acids biosynthesis. Catalyzes the dehydration of short chain beta-hydroxyacyl-ACPs and long chain saturated and unsaturated beta-hydroxyacyl-ACPs. The protein is 3-hydroxyacyl-[acyl-carrier-protein] dehydratase FabZ of Bartonella bacilliformis (strain ATCC 35685 / KC583 / Herrer 020/F12,63).